The primary structure comprises 392 residues: Phosphoglycerate kinase (392 aa).

Substrate-binding positions include 26-28 (DLN), Arg-41, 64-67 (HLGR), Arg-118, and Arg-151. ATP contacts are provided by residues Lys-202, Glu-319, and 345–348 (GGDT).

This sequence belongs to the phosphoglycerate kinase family. Monomer.

Its subcellular location is the cytoplasm. It catalyses the reaction (2R)-3-phosphoglycerate + ATP = (2R)-3-phospho-glyceroyl phosphate + ADP. Its pathway is carbohydrate degradation; glycolysis; pyruvate from D-glyceraldehyde 3-phosphate: step 2/5. The chain is Phosphoglycerate kinase from Photobacterium profundum (strain SS9).